A 238-amino-acid chain; its full sequence is Phosphoribosylaminoimidazole-succinocarboxamide synthase (238 aa).

It belongs to the SAICAR synthetase family.

The enzyme catalyses 5-amino-1-(5-phospho-D-ribosyl)imidazole-4-carboxylate + L-aspartate + ATP = (2S)-2-[5-amino-1-(5-phospho-beta-D-ribosyl)imidazole-4-carboxamido]succinate + ADP + phosphate + 2 H(+). It functions in the pathway purine metabolism; IMP biosynthesis via de novo pathway; 5-amino-1-(5-phospho-D-ribosyl)imidazole-4-carboxamide from 5-amino-1-(5-phospho-D-ribosyl)imidazole-4-carboxylate: step 1/2. The chain is Phosphoribosylaminoimidazole-succinocarboxamide synthase from Alcanivorax borkumensis (strain ATCC 700651 / DSM 11573 / NCIMB 13689 / SK2).